We begin with the raw amino-acid sequence, 132 residues long: Thioredoxin H4-2 (132 aa).

One can recognise a Thioredoxin domain in the interval 18-130 (DFKGGNVHVI…LEKKVQALAD (113 aa)). Active-site nucleophile residues include C56 and C59. An intrachain disulfide couples C56 to C59.

It belongs to the thioredoxin family. Plant H-type subfamily.

It localises to the cytoplasm. In terms of biological role, probable thiol-disulfide oxidoreductase that may be involved in the redox regulation of a number of cytosolic enzymes. The polypeptide is Thioredoxin H4-2 (Oryza sativa subsp. japonica (Rice)).